We begin with the raw amino-acid sequence, 93 residues long: Ribonuclease P protein component 1 (93 aa).

It belongs to the eukaryotic/archaeal RNase P protein component 1 family. As to quaternary structure, consists of a catalytic RNA component and at least 4-5 protein subunits.

The protein resides in the cytoplasm. It carries out the reaction Endonucleolytic cleavage of RNA, removing 5'-extranucleotides from tRNA precursor.. Its function is as follows. Part of ribonuclease P, a protein complex that generates mature tRNA molecules by cleaving their 5'-ends. This chain is Ribonuclease P protein component 1, found in Methanothermobacter thermautotrophicus (strain ATCC 29096 / DSM 1053 / JCM 10044 / NBRC 100330 / Delta H) (Methanobacterium thermoautotrophicum).